We begin with the raw amino-acid sequence, 410 residues long: Caspase-1 (410 aa).

In terms of domain architecture, CARD spans 1 to 91 (MADKVLKGKR…HLAETLGLSS (91 aa)). A propeptide spanning residues 1–119 (MADKVLKGKR…PLPASVNNMP (119 aa)) is cleaved from the precursor. Residues 88–104 (GLSSSPQSGNSQNTTDS) show a composition bias toward polar residues. The interval 88–125 (GLSSSPQSGNSQNTTDSEVAFPPLPASVNNMPGPAEPE) is disordered. Residues His-235 and Cys-284 contribute to the active site. A propeptide spanning residues 297–322 (SPAAPMDSTSQMGSSLSQVGDNLEDD) is cleaved from the precursor.

This sequence belongs to the peptidase C14A family. In terms of assembly, heterotetramer that consists of two anti-parallel arranged heterodimers, each one formed by a 20 kDa (Caspase-1 subunit p20) and a 10 kDa (Caspase-1 subunit p10) subunit. May be a component of the inflammasome, a protein complex which also includes PYCARD, CARD8 and NLRP2 and whose function would be the activation of pro-inflammatory caspases. Component of the AIM2 PANoptosome complex, a multiprotein complex that drives inflammatory cell death (PANoptosis). Both the p10 and p20 subunits interact with MEFV. Interacts with CARD17P/INCA and CARD18. Interacts with SERPINB1; this interaction regulates CASP1 activity. Heterotetramer that consists of two anti-parallel arranged heterodimers, each one formed by a 20 kDa (Caspase-1 subunit p20) and a 10 kDa (Caspase-1 subunit p10) subunit. The two subunits are derived from the precursor sequence by an autocatalytic mechanism. Post-translationally, ubiquitinated via 'Lys-11'-linked polyubiquitination. Deubiquitinated by USP8.

It localises to the cytoplasm. It is found in the cell membrane. It catalyses the reaction Strict requirement for an Asp residue at position P1 and has a preferred cleavage sequence of Tyr-Val-Ala-Asp-|-.. Its function is as follows. Thiol protease involved in a variety of inflammatory processes by proteolytically cleaving other proteins, such as the precursors of the inflammatory cytokines interleukin-1 beta (IL1B) and interleukin 18 (IL18) as well as the pyroptosis inducer Gasdermin-D (GSDMD), into active mature peptides. Plays a key role in cell immunity as an inflammatory response initiator: once activated through formation of an inflammasome complex, it initiates a pro-inflammatory response through the cleavage of the two inflammatory cytokines IL1B and IL18, releasing the mature cytokines which are involved in a variety of inflammatory processes. Cleaves a tetrapeptide after an Asp residue at position P1. Also initiates pyroptosis, a programmed lytic cell death pathway, through cleavage of GSDMD. In contrast to cleavage of interleukin IL1B, recognition and cleavage of GSDMD is not strictly dependent on the consensus cleavage site but depends on an exosite interface on CASP1 that recognizes and binds the Gasdermin-D, C-terminal (GSDMD-CT) part. Cleaves and activates CASP7 in response to bacterial infection, promoting plasma membrane repair. Upon inflammasome activation, during DNA virus infection but not RNA virus challenge, controls antiviral immunity through the cleavage of CGAS, rendering it inactive. In apoptotic cells, cleaves SPHK2 which is released from cells and remains enzymatically active extracellularly. In Felis catus (Cat), this protein is Caspase-1 (CASP1).